Consider the following 211-residue polypeptide: ATP phosphoribosyltransferase (211 aa).

It belongs to the ATP phosphoribosyltransferase family. Short subfamily. As to quaternary structure, heteromultimer composed of HisG and HisZ subunits.

It localises to the cytoplasm. The catalysed reaction is 1-(5-phospho-beta-D-ribosyl)-ATP + diphosphate = 5-phospho-alpha-D-ribose 1-diphosphate + ATP. Its pathway is amino-acid biosynthesis; L-histidine biosynthesis; L-histidine from 5-phospho-alpha-D-ribose 1-diphosphate: step 1/9. In terms of biological role, catalyzes the condensation of ATP and 5-phosphoribose 1-diphosphate to form N'-(5'-phosphoribosyl)-ATP (PR-ATP). Has a crucial role in the pathway because the rate of histidine biosynthesis seems to be controlled primarily by regulation of HisG enzymatic activity. The chain is ATP phosphoribosyltransferase from Bacillus cereus (strain 03BB102).